The sequence spans 573 residues: Methionine--tRNA ligase (573 aa).

The 'HIGH' region signature appears at 10 to 20 (PYVNSVPHLGN). Zn(2+) is bound by residues cysteine 143, cysteine 146, cysteine 156, and cysteine 159. Positions 333 to 337 (KFSKS) match the 'KMSKS' region motif. Position 336 (lysine 336) interacts with ATP.

The protein belongs to the class-I aminoacyl-tRNA synthetase family. MetG type 1 subfamily. Zn(2+) serves as cofactor.

It localises to the cytoplasm. The enzyme catalyses tRNA(Met) + L-methionine + ATP = L-methionyl-tRNA(Met) + AMP + diphosphate. Its function is as follows. Is required not only for elongation of protein synthesis but also for the initiation of all mRNA translation through initiator tRNA(fMet) aminoacylation. In Saccharolobus solfataricus (strain ATCC 35092 / DSM 1617 / JCM 11322 / P2) (Sulfolobus solfataricus), this protein is Methionine--tRNA ligase.